The sequence spans 189 residues: Parkinson disease protein 7 (189 aa).

A2 is modified (N-acetylalanine). 2 S-palmitoyl cysteine lipidation sites follow: C46 and C53. A Phosphotyrosine modification is found at Y67. Catalysis depends on C106, which acts as the Nucleophile. A Cysteine sulfinic acid (-SO2H); alternate modification is found at C106. C106 carries the S-palmitoyl cysteine; alternate lipid modification. The active site involves H126. Residue K130 forms a Glycyl lysine isopeptide (Lys-Gly) (interchain with G-Cter in SUMO) linkage. N6-acetyllysine is present on K148. K182 carries the N6-succinyllysine modification.

This sequence belongs to the peptidase C56 family. In terms of assembly, homodimer. Binds EFCAB6/DJBP and PIAS2. Part of a ternary complex containing PARK7, EFCAB6/DJBP and AR. Interacts (via N-terminus) with OTUD7B. Interacts with BBS1, HIPK1, CLCF1 and MTERF. Forms a complex with PINK1 and PRKN. Interacts (via C-terminus) with NCF1; the interaction is enhanced by LPS and modulates NCF1 phosphorylation and membrane translocation. Interacts with NENF. It depends on Deglycase activity does not require glutathione as a cofactor, however, glycated glutathione constitutes a PARK7 substrate. as a cofactor. Post-translationally, sumoylated on Lys-130 by PIAS2 or PIAS4; which is enhanced after ultraviolet irradiation and essential for cell-growth promoting activity and transforming activity. In terms of processing, cys-106 is easily oxidized to sulfinic acid. Undergoes cleavage of a C-terminal peptide and subsequent activation of protease activity in response to oxidative stress. As to expression, highly expressed in pancreas, kidney, skeletal muscle, liver, testis and heart. Detected at slightly lower levels in placenta and brain (at protein level). Detected in astrocytes, Sertoli cells, spermatogonia, spermatids and spermatozoa. Expressed by pancreatic islets at higher levels than surrounding exocrine tissues.

It localises to the cell membrane. It is found in the cytoplasm. Its subcellular location is the nucleus. The protein localises to the membrane raft. The protein resides in the mitochondrion. It localises to the endoplasmic reticulum. It carries out the reaction N(omega)-(1-hydroxy-2-oxopropyl)-L-arginyl-[protein] + H2O = lactate + L-arginyl-[protein] + H(+). The enzyme catalyses N(6)-(1-hydroxy-2-oxopropyl)-L-lysyl-[protein] + H2O = lactate + L-lysyl-[protein] + H(+). It catalyses the reaction S-(1-hydroxy-2-oxopropyl)-L-cysteinyl-[protein] + H2O = lactate + L-cysteinyl-[protein] + H(+). The catalysed reaction is N(omega)-(1-hydroxy-2-oxoethyl)-L-arginyl-[protein] + H2O = L-arginyl-[protein] + glycolate + H(+). It carries out the reaction N(6)-(1-hydroxy-2-oxoethyl)-L-lysyl-[protein] + H2O = glycolate + L-lysyl-[protein] + H(+). The enzyme catalyses S-(1-hydroxy-2-oxoethyl)-L-cysteinyl-[protein] + H2O = glycolate + L-cysteinyl-[protein] + H(+). It catalyses the reaction N(2)-(1-hydroxy-2-oxopropyl)-dGTP + H2O = lactate + dGTP + H(+). The catalysed reaction is N(2)-(1-hydroxy-2-oxopropyl)-GTP + H2O = lactate + GTP + H(+). It carries out the reaction N(2)-(1-hydroxy-2-oxopropyl)-GDP + H2O = lactate + GDP + H(+). The enzyme catalyses N(2)-(1-hydroxy-2-oxopropyl)-GMP + H2O = lactate + GMP + H(+). It catalyses the reaction N(2)-(1-hydroxy-2-oxoethyl)-dGTP + H2O = dGTP + glycolate + H(+). The catalysed reaction is N(2)-(1-hydroxy-2-oxoethyl)-GTP + H2O = glycolate + GTP + H(+). It carries out the reaction N(2)-(1-hydroxy-2-oxoethyl)-GDP + H2O = glycolate + GDP + H(+). The enzyme catalyses N(2)-(1-hydroxy-2-oxoethyl)-GMP + H2O = glycolate + GMP + H(+). It catalyses the reaction an N(2)-(1-hydroxy-2-oxopropyl)-guanosine in RNA + H2O = a guanosine in RNA + lactate + H(+). The catalysed reaction is an N(2)-(1-hydroxy-2-oxopropyl)-2'-deoxyguanosine in DNA + H2O = a 2'-deoxyguanosine in DNA + lactate + H(+). It carries out the reaction an N(2)-(1-hydroxy-2-oxoethyl)-guanosine in RNA + H2O = a guanosine in RNA + glycolate + H(+). The enzyme catalyses an N(2)-(1-hydroxy-2-oxoethyl)-2'-deoxyguanosine in DNA + H2O = a 2'-deoxyguanosine in DNA + glycolate + H(+). Its function is as follows. Multifunctional protein with controversial molecular function which plays an important role in cell protection against oxidative stress and cell death acting as oxidative stress sensor and redox-sensitive chaperone and protease. It is involved in neuroprotective mechanisms like the stabilization of NFE2L2 and PINK1 proteins, male fertility as a positive regulator of androgen signaling pathway as well as cell growth and transformation through, for instance, the modulation of NF-kappa-B signaling pathway. Has been described as a protein and nucleotide deglycase that catalyzes the deglycation of the Maillard adducts formed between amino groups of proteins or nucleotides and reactive carbonyl groups of glyoxals. But this function is rebuted by other works. As a protein deglycase, repairs methylglyoxal- and glyoxal-glycated proteins, and releases repaired proteins and lactate or glycolate, respectively. Deglycates cysteine, arginine and lysine residues in proteins, and thus reactivates these proteins by reversing glycation by glyoxals. Acts on early glycation intermediates (hemithioacetals and aminocarbinols), preventing the formation of advanced glycation endproducts (AGE) that cause irreversible damage. Also functions as a nucleotide deglycase able to repair glycated guanine in the free nucleotide pool (GTP, GDP, GMP, dGTP) and in DNA and RNA. Is thus involved in a major nucleotide repair system named guanine glycation repair (GG repair), dedicated to reversing methylglyoxal and glyoxal damage via nucleotide sanitization and direct nucleic acid repair. Protects histones from adduction by methylglyoxal, controls the levels of methylglyoxal-derived argininine modifications on chromatin. Able to remove the glycations and restore histone 3, histone glycation disrupts both local and global chromatin architecture by altering histone-DNA interactions as well as histone acetylation and ubiquitination levels. Displays a very low glyoxalase activity that may reflect its deglycase activity. Eliminates hydrogen peroxide and protects cells against hydrogen peroxide-induced cell death. Required for correct mitochondrial morphology and function as well as for autophagy of dysfunctional mitochondria. Plays a role in regulating expression or stability of the mitochondrial uncoupling proteins SLC25A14 and SLC25A27 in dopaminergic neurons of the substantia nigra pars compacta and attenuates the oxidative stress induced by calcium entry into the neurons via L-type channels during pacemaking. Regulates astrocyte inflammatory responses, may modulate lipid rafts-dependent endocytosis in astrocytes and neuronal cells. In pancreatic islets, involved in the maintenance of mitochondrial reactive oxygen species (ROS) levels and glucose homeostasis in an age- and diet dependent manner. Protects pancreatic beta cells from cell death induced by inflammatory and cytotoxic setting. Binds to a number of mRNAs containing multiple copies of GG or CC motifs and partially inhibits their translation but dissociates following oxidative stress. Metal-binding protein able to bind copper as well as toxic mercury ions, enhances the cell protection mechanism against induced metal toxicity. In macrophages, interacts with the NADPH oxidase subunit NCF1 to direct NADPH oxidase-dependent ROS production, and protects against sepsis. The chain is Parkinson disease protein 7 from Homo sapiens (Human).